The sequence spans 567 residues: SRSF protein kinase 3 (567 aa).

Over residues 1-16 (MSASTGGGGDSGGSGG) the composition is skewed to gly residues. A disordered region spans residues 1–36 (MSASTGGGGDSGGSGGSSSSSQASCGPESSGSELAL). Low complexity predominate over residues 17–32 (SSSSSQASCGPESSGS). S50 is modified (phosphoserine). Residues 79–565 (YHVVRKLGWG…AADCLQHPWL (487 aa)) form the Protein kinase domain. ATP is bound by residues 85–93 (LGWGHFSTV) and K108. D212 acts as the Proton acceptor in catalysis. 2 disordered regions span residues 238–283 (QQAG…RLLE) and 298–351 (ATQA…SQTS). Residues 248–258 (SIVSTAPQEVL) are compositionally biased toward polar residues. A compositionally biased stretch (basic residues) spans 264–279 (SKNKRKKMRRKRKQQK). Over residues 327–348 (AGPSPASSSPAPGGGRSLSAGS) the composition is skewed to low complexity. Residue S330 is modified to Phosphoserine.

The protein belongs to the protein kinase superfamily. CMGC Ser/Thr protein kinase family. In terms of tissue distribution, expressed in skeletal and heart muscle. Also expressed in the fetal brain.

Its subcellular location is the nucleus. It is found in the cytoplasm. The enzyme catalyses L-seryl-[protein] + ATP = O-phospho-L-seryl-[protein] + ADP + H(+). The catalysed reaction is L-threonyl-[protein] + ATP = O-phospho-L-threonyl-[protein] + ADP + H(+). Functionally, serine/arginine-rich protein-specific kinase which specifically phosphorylates its substrates at serine residues located in regions rich in arginine/serine dipeptides, known as RS domains. Phosphorylates the SR splicing factor SRSF1 and the lamin-B receptor (LBR) in vitro. Required for normal muscle development. This Homo sapiens (Human) protein is SRSF protein kinase 3 (SRPK3).